A 231-amino-acid chain; its full sequence is ATP phosphoribosyltransferase (231 aa).

It belongs to the ATP phosphoribosyltransferase family. Short subfamily. Heteromultimer composed of HisG and HisZ subunits.

It is found in the cytoplasm. It carries out the reaction 1-(5-phospho-beta-D-ribosyl)-ATP + diphosphate = 5-phospho-alpha-D-ribose 1-diphosphate + ATP. The protein operates within amino-acid biosynthesis; L-histidine biosynthesis; L-histidine from 5-phospho-alpha-D-ribose 1-diphosphate: step 1/9. In terms of biological role, catalyzes the condensation of ATP and 5-phosphoribose 1-diphosphate to form N'-(5'-phosphoribosyl)-ATP (PR-ATP). Has a crucial role in the pathway because the rate of histidine biosynthesis seems to be controlled primarily by regulation of HisG enzymatic activity. The protein is ATP phosphoribosyltransferase of Brucella melitensis biotype 2 (strain ATCC 23457).